The chain runs to 628 residues: Glutamyl-tRNA(Gln) amidotransferase subunit E (628 aa).

It belongs to the GatB/GatE family. GatE subfamily. In terms of assembly, heterodimer of GatD and GatE.

It carries out the reaction L-glutamyl-tRNA(Gln) + L-glutamine + ATP + H2O = L-glutaminyl-tRNA(Gln) + L-glutamate + ADP + phosphate + H(+). Functionally, allows the formation of correctly charged Gln-tRNA(Gln) through the transamidation of misacylated Glu-tRNA(Gln) in organisms which lack glutaminyl-tRNA synthetase. The reaction takes place in the presence of glutamine and ATP through an activated gamma-phospho-Glu-tRNA(Gln). The GatDE system is specific for glutamate and does not act on aspartate. In Sulfurisphaera tokodaii (strain DSM 16993 / JCM 10545 / NBRC 100140 / 7) (Sulfolobus tokodaii), this protein is Glutamyl-tRNA(Gln) amidotransferase subunit E.